The sequence spans 120 residues: Myohemerythrin (120 aa).

The Fe cation site is built by H26, H56, E60, H75, H79, H108, and D113.

The protein belongs to the hemerythrin family.

Its function is as follows. Myohemerythrin is an oxygen-binding protein found in the retractor muscles of certain worms. The oxygen-binding site contains two iron atoms. The chain is Myohemerythrin from Riftia pachyptila (Vent tube worm).